Reading from the N-terminus, the 349-residue chain is Small ribosomal subunit biogenesis GTPase RsgA 2 (349 aa).

Positions 97–252 constitute a CP-type G domain; the sequence is AEQLIATNVD…IIDTPGMREL (156 aa). GTP contacts are provided by residues 142–145 and 194–202; these read TKAD and GSSGVGKST. Zn(2+)-binding residues include cysteine 275, cysteine 280, histidine 282, and cysteine 288.

It belongs to the TRAFAC class YlqF/YawG GTPase family. RsgA subfamily. As to quaternary structure, monomer. Associates with 30S ribosomal subunit, binds 16S rRNA. Zn(2+) serves as cofactor.

It localises to the cytoplasm. One of several proteins that assist in the late maturation steps of the functional core of the 30S ribosomal subunit. Helps release RbfA from mature subunits. May play a role in the assembly of ribosomal proteins into the subunit. Circularly permuted GTPase that catalyzes slow GTP hydrolysis, GTPase activity is stimulated by the 30S ribosomal subunit. This Vibrio vulnificus (strain CMCP6) protein is Small ribosomal subunit biogenesis GTPase RsgA 2.